We begin with the raw amino-acid sequence, 442 residues long: Protein PRRC1-A (442 aa).

Residues 1-27 (MMEESGIETTPPSTPPPSTIGTSVPAA) are disordered.

It belongs to the PRRC1 family.

It is found in the golgi apparatus. The chain is Protein PRRC1-A (prrc1-a) from Xenopus laevis (African clawed frog).